A 303-amino-acid chain; its full sequence is Mitochondrial carrier homolog 2 (303 aa).

An N-acetylalanine modification is found at Ala-2. Over 2 to 15 (ADAASQVLLGSGLT) the chain is Mitochondrial intermembrane. Solcar repeat units follow at residues 2 to 98 (ADAA…YQEC) and 118 to 206 (DRVI…VNTY). The chain crosses the membrane as a helical span at residues 16 to 36 (ILSQPLMYVKVLIQVGYEPLA). The Cytoplasmic portion of the chain corresponds to 37-77 (PTVGRNIFGRQVCQLPGLFCYAQHIASIDGKRGLFTGLTPR). Residues 78 to 92 (LCSGVLGTVVHGKVL) traverse the membrane as a helical segment. At 93-135 (QHYQECDKAEESGSGNVQKEVSSSFDRVIKETTREMMARSAAT) the chain is on the mitochondrial intermembrane side. A helical membrane pass occupies residues 136-156 (LITHPFHVITLRSMVQFIGRE). Over 157–180 (SKYCGLCDSIATIYREEGILGFFA) the chain is Cytoplasmic. A helical transmembrane segment spans residues 181-199 (GLIPRLLGDIISLWLCNSL). Residues 200–231 (AYLVNTYALDSGVSTMNEMKSYSQAVTGFFAS) lie on the Mitochondrial intermembrane side of the membrane. The chain crosses the membrane as a helical span at residues 232–252 (MLTYPFVLVSNLMAVNNCGLA). The Cytoplasmic segment spans residues 253 to 280 (GGCPPYAPIYSSWIDCWCMLQKEGNMSR). The helical transmembrane segment at 281–303 (GNSLFFRKVPFGKTYCCDLRMLI) threads the bilayer.

The protein belongs to the mitochondrial carrier (TC 2.A.29) family. Interacts with p15BID.

The protein localises to the mitochondrion outer membrane. Its function is as follows. Protein insertase that mediates insertion of transmembrane proteins into the mitochondrial outer membrane. Catalyzes insertion of proteins with alpha-helical transmembrane regions, such as signal-anchored, tail-anchored and multi-pass membrane proteins. Does not mediate insertion of beta-barrel transmembrane proteins. Also acts as a receptor for the truncated form of pro-apoptotic BH3-interacting domain death agonist (p15 BID) and has therefore a critical function in apoptosis. Regulates the quiescence/cycling of hematopoietic stem cells (HSCs). Acts as a regulator of mitochondrial fusion, essential for the naive-to-primed interconversion of embryonic stem cells (ESCs). Acts as a regulator of lipid homeostasis and has a regulatory role in adipocyte differentiation and biology. The protein is Mitochondrial carrier homolog 2 (MTCH2) of Bos taurus (Bovine).